The primary structure comprises 314 residues: Formylglycine-generating enzyme (314 aa).

The span at 1 to 20 shows a compositional bias: low complexity; the sequence is MAVAAPSPAAAAEPGPAARP. The tract at residues 1-31 is disordered; that stretch reads MAVAAPSPAAAAEPGPAARPRSTRGQVRLPG. Ca(2+) is bound by residues Asn194, Ile195, Asp208, and His210. Cu(2+) contacts are provided by Cys272 and Cys277.

This sequence belongs to the sulfatase-modifying factor family. Cu(2+) is required as a cofactor.

It catalyses the reaction L-cysteinyl-[sulfatase] + 2 a thiol + O2 = an organic disulfide + 3-oxo-L-alanyl-[sulfatase] + hydrogen sulfide + H2O + H(+). It functions in the pathway protein modification; sulfatase oxidation. In terms of biological role, oxidase that catalyzes the conversion of cysteine to 3-oxoalanine on target proteins. 3-oxoalanine modification, which is also named formylglycine (fGly), occurs in the maturation of arylsulfatases and some alkaline phosphatases that use the hydrated form of 3-oxoalanine as a catalytic nucleophile. The protein is Formylglycine-generating enzyme of Streptomyces coelicolor (strain ATCC BAA-471 / A3(2) / M145).